Reading from the N-terminus, the 254-residue chain is MALSSTQAIPETGDIPRHVAIIMDGNGRWATRRHLPRTAGHAKGVHAVRRVVEACGRRGVRYLTLFAFSSENWRRPADEVSLLMRLFVQALEREVDKLQDQGVRLHVVGDLSAFEPKLQELIAQAQERTEHNDRLHLTVAANYGGRWDILQATRAMLRADPGLAQDPDRIDEARLAEHLSMAWAPEPDLFIRTGGEQRISNFLVWQLAYAEFYFTEQFWPDFGADELDAAFEWYRTRERRFGRTSAQLRGGAKR.

Asp-24 is a catalytic residue. Asp-24 provides a ligand contact to Mg(2+). Residues Gly-25 to Arg-28, Trp-29, Arg-37, His-41, and Ser-69 to Glu-71 contribute to the substrate site. Asn-72 serves as the catalytic Proton acceptor. Substrate-binding positions include Trp-73, Arg-75, Arg-192, and Arg-198–Ser-200. Glu-211 serves as a coordination point for Mg(2+).

The protein belongs to the UPP synthase family. In terms of assembly, homodimer. Mg(2+) is required as a cofactor.

Its function is as follows. Catalyzes the condensation of isopentenyl diphosphate (IPP) with allylic pyrophosphates generating different type of terpenoids. The polypeptide is Isoprenyl transferase (Bordetella parapertussis (strain 12822 / ATCC BAA-587 / NCTC 13253)).